The following is a 319-amino-acid chain: Quinolinate synthase (319 aa).

Iminosuccinate is bound by residues His-34 and Ser-51. Cys-96 is a [4Fe-4S] cluster binding site. Iminosuccinate is bound by residues 122-124 (YIN) and Ser-139. Residue Cys-182 coordinates [4Fe-4S] cluster. Iminosuccinate-binding positions include 208 to 210 (HPE) and Thr-225. Position 276 (Cys-276) interacts with [4Fe-4S] cluster.

Belongs to the quinolinate synthase family. Type 2 subfamily. It depends on [4Fe-4S] cluster as a cofactor.

The protein resides in the cytoplasm. It catalyses the reaction iminosuccinate + dihydroxyacetone phosphate = quinolinate + phosphate + 2 H2O + H(+). Its pathway is cofactor biosynthesis; NAD(+) biosynthesis; quinolinate from iminoaspartate: step 1/1. Functionally, catalyzes the condensation of iminoaspartate with dihydroxyacetone phosphate to form quinolinate. The protein is Quinolinate synthase of Thermosynechococcus vestitus (strain NIES-2133 / IAM M-273 / BP-1).